Here is a 951-residue protein sequence, read N- to C-terminus: Zinc fingers and homeoboxes protein 3 (951 aa).

The segment at 1 to 66 (MASKRKSTTP…SSTDGSALAN (66 aa)) is disordered. Over residues 42–58 (PSEAPEASSEAAPNPSS) the composition is skewed to low complexity. 2 C2H2-type zinc fingers span residues 77 to 100 (YSCK…TSEH) and 109 to 132 (FVCT…AKCH). The disordered stretch occupies residues 198 to 249 (KENAPTQPGGEALPKPLAGETEGKEGDHTFINGATPVSQASANSTKPPHTAN). Positions 232–244 (TPVSQASANSTKP) are enriched in polar residues. The required for homodimerization and interaction with NFYA stretch occupies residues 237–481 (ASANSTKPPH…LLTACPSITS (245 aa)). The required for repressor activity stretch occupies residues 297–495 (LSSIPTYNAA…DANIYKNKKS (199 aa)). 2 consecutive DNA-binding regions (homeobox) follow at residues 298 to 357 (SSIP…GISW) and 487 to 546 (ANIY…RNLK). The segment at 490–548 (YKNKKSHEQLSALKGSFCRNQFPGQSEVEHLTKVTGLSTREVRKWFSDRRYHCRNLKGT) is required for nuclear localization. Phosphoserine is present on Ser-597. Residues 605 to 664 (TPTKYKERAPEQLRVLESSFAQNPLPPEEELDRLRSETKMTRREIDGWFSERRKRVNAEE) constitute a DNA-binding region (homeobox 3). Disordered stretches follow at residues 621–642 (ESSF…RSET) and 661–702 (NAEE…NGSS). The span at 661–674 (NAEETKKADGHAPQ) shows a compositional bias: basic and acidic residues. Residues 675–690 (EEAEGAEEEGRDEELA) are compositionally biased toward acidic residues. A phosphoserine mark is found at Ser-701 and Ser-716. 2 DNA-binding regions (homeobox) span residues 759-818 (PSRV…KNGQ) and 830-889 (FPPG…TRAV). The interval 885-951 (ETRAVADTSS…PQSGRQLETD (67 aa)) is disordered. A phosphoserine mark is found at Ser-922 and Ser-941. A compositionally biased stretch (polar residues) spans 937 to 951 (FDTSSPQSGRQLETD).

This sequence belongs to the ZHX family. Homodimer (via homeobox domain 1). Heterodimer with ZHX1 (via homeobox domain 1). Heterodimer with ZHX2 (via homeobox domain 1). Heterodimerization with ZHX1 is a prerequisite for repressor activity. Interacts with NFYA. As to expression, widely expressed.

It localises to the cytoplasm. It is found in the nucleus. In terms of biological role, acts as a transcriptional repressor. Involved in the early stages of mesenchymal stem cell (MSC) osteogenic differentiation. Is a regulator of podocyte gene expression during primary glomerula disease. Binds to promoter DNA. In Rattus norvegicus (Rat), this protein is Zinc fingers and homeoboxes protein 3 (Zhx3).